The chain runs to 450 residues: Keratin, type I cytoskeletal 25 (450 aa).

Low complexity predominate over residues M1–L23. The segment at M1–G26 is disordered. The head stretch occupies residues M1–N78. Residues E79–W114 are coil 1A. Residues E79 to C394 enclose the IF rod domain. Residues Y115–I136 are linker 1. Positions I137 to L228 are coil 1B. The interval Q229–L251 is linker 12. The coil 2 stretch occupies residues L252–D390. The tract at residues D391–N450 is tail. S442 carries the phosphoserine modification.

This sequence belongs to the intermediate filament family. Heterodimer of a type I and a type II keratin. Heterodimer with type II keratin KRT5 leading to the formation of keratin intermediate filament (KIF) network. Interacts with KRT6A to form filaments.

Its subcellular location is the cytoplasm. Essential for the proper assembly of type I and type II keratin protein complexes and formation of keratin intermediate filaments in the inner root sheath (irs). Plays a role in the cytoskeleton organization. This is Keratin, type I cytoskeletal 25 (KRT25) from Pan troglodytes (Chimpanzee).